The primary structure comprises 642 residues: Threonine--tRNA ligase (642 aa).

The 61-residue stretch at 1–61 (MPIITLPDGS…TADSELAIIT (61 aa)) folds into the TGS domain. The interval 243 to 534 (DHRKIGKQLD…LIEEYAGKFP (292 aa)) is catalytic. Zn(2+) contacts are provided by Cys-334, His-385, and His-511.

The protein belongs to the class-II aminoacyl-tRNA synthetase family. In terms of assembly, homodimer. It depends on Zn(2+) as a cofactor.

The protein resides in the cytoplasm. It carries out the reaction tRNA(Thr) + L-threonine + ATP = L-threonyl-tRNA(Thr) + AMP + diphosphate + H(+). Functionally, catalyzes the attachment of threonine to tRNA(Thr) in a two-step reaction: L-threonine is first activated by ATP to form Thr-AMP and then transferred to the acceptor end of tRNA(Thr). Also edits incorrectly charged L-seryl-tRNA(Thr). The sequence is that of Threonine--tRNA ligase from Shewanella frigidimarina (strain NCIMB 400).